The primary structure comprises 335 residues: Glyceraldehyde-3-phosphate dehydrogenase, cytosolic (335 aa).

NAD(+) is bound by residues 13–14 (RI), Asp-35, and Arg-80. D-glyceraldehyde 3-phosphate is bound by residues 151–153 (SCT), Thr-182, 211–212 (TG), and Arg-234. The active-site Nucleophile is the Cys-152. Residue Asn-316 participates in NAD(+) binding.

It belongs to the glyceraldehyde-3-phosphate dehydrogenase family. As to quaternary structure, homotetramer.

It localises to the cytoplasm. The enzyme catalyses D-glyceraldehyde 3-phosphate + phosphate + NAD(+) = (2R)-3-phospho-glyceroyl phosphate + NADH + H(+). Its pathway is carbohydrate degradation; glycolysis; pyruvate from D-glyceraldehyde 3-phosphate: step 1/5. The chain is Glyceraldehyde-3-phosphate dehydrogenase, cytosolic (GAPC) from Chondrus crispus (Carrageen Irish moss).